The chain runs to 607 residues: UvrABC system protein C (607 aa).

In terms of domain architecture, GIY-YIG spans 14–93 (HKPGVYLMLD…IKKHKPRYNI (80 aa)). Residues 203-238 (RDLLAELKRQMLQASERLNFEQAGQFRDQIRALKTT) enclose the UVR domain.

This sequence belongs to the UvrC family. In terms of assembly, interacts with UvrB in an incision complex.

The protein localises to the cytoplasm. In terms of biological role, the UvrABC repair system catalyzes the recognition and processing of DNA lesions. UvrC both incises the 5' and 3' sides of the lesion. The N-terminal half is responsible for the 3' incision and the C-terminal half is responsible for the 5' incision. The sequence is that of UvrABC system protein C from Desulfotalea psychrophila (strain LSv54 / DSM 12343).